Consider the following 126-residue polypeptide: Holo-[acyl-carrier-protein] synthase (126 aa).

Residues Asp-9 and Glu-58 each coordinate Mg(2+).

Belongs to the P-Pant transferase superfamily. AcpS family. It depends on Mg(2+) as a cofactor.

The protein resides in the cytoplasm. It catalyses the reaction apo-[ACP] + CoA = holo-[ACP] + adenosine 3',5'-bisphosphate + H(+). In terms of biological role, transfers the 4'-phosphopantetheine moiety from coenzyme A to a Ser of acyl-carrier-protein. The polypeptide is Holo-[acyl-carrier-protein] synthase (Cronobacter sakazakii (strain ATCC BAA-894) (Enterobacter sakazakii)).